The chain runs to 425 residues: MTLIALGINHNTASLDVREKVAFSSTQIESALRAAIAGAGLSEVAILSTCNRTELYAYGSSQANSLIQWLAEYKQVNVAELEQSHYLYTASEAASHMMKVASGLDSLVLGEPQILGQMKSAYAVAREAGVLGGHLHDVFQRVFSVAKRVRSETAIGENPVSVAYAAVSLAQQIFSDLKQDTALLIGAGETIELVARHLAEQGIKKLIVANRTLGNARSLAEQFGAEAILLADIPEHLHRADIVISSTASQLPLLGKGAVEQALKRRRHKPMFMVDIAVPRDIEAQVGDLADVYLYTVDDLKEVIDENMRSRQQAAKIAEEIIVEGLLHYEREQRALTSVDTIKALRQTMDALREQELEKSRKALEAGADPAQVLEQLARSLTNKFLHTPSTQLKQAGADGEQDMLRTVRTLFSLPSANESKSEKE.

Substrate is bound by residues 49–52, Ser106, 111–113, and Gln117; these read TCNR and EPQ. Catalysis depends on Cys50, which acts as the Nucleophile. 186–191 serves as a coordination point for NADP(+); the sequence is GAGETI.

The protein belongs to the glutamyl-tRNA reductase family. In terms of assembly, homodimer.

It carries out the reaction (S)-4-amino-5-oxopentanoate + tRNA(Glu) + NADP(+) = L-glutamyl-tRNA(Glu) + NADPH + H(+). It functions in the pathway porphyrin-containing compound metabolism; protoporphyrin-IX biosynthesis; 5-aminolevulinate from L-glutamyl-tRNA(Glu): step 1/2. Functionally, catalyzes the NADPH-dependent reduction of glutamyl-tRNA(Glu) to glutamate 1-semialdehyde (GSA). In Saccharophagus degradans (strain 2-40 / ATCC 43961 / DSM 17024), this protein is Glutamyl-tRNA reductase.